Consider the following 197-residue polypeptide: Large ribosomal subunit protein eL15 (197 aa).

Basic residues-rich tracts occupy residues 70–90 (PKGGRRKSRPKKGRRPKRMGK), 163–179 (RGKTGAGKKARGLRKRG), and 187–197 (PSLRAHRRRGK). 2 disordered regions span residues 70 to 99 (PKGGRRKSRPKKGRRPKRMGKNKFSPGKSK) and 163 to 197 (RGKTGAGKKARGLRKRGKGAEKVRPSLRAHRRRGK).

This sequence belongs to the eukaryotic ribosomal protein eL15 family.

The chain is Large ribosomal subunit protein eL15 from Methanopyrus kandleri (strain AV19 / DSM 6324 / JCM 9639 / NBRC 100938).